The chain runs to 1894 residues: Fibronectin type III domain-containing protein 1 (1894 aa).

Positions 1-32 (MAPEAGATLRAPRRLSWAALLLLAALLPVASS) are cleaved as a signal peptide. The Fibronectin type-III 1 domain maps to 39-131 (HPLKPRHVKL…PVYRAESPPG (93 aa)). The N-linked (GlcNAc...) asparagine glycan is linked to asparagine 149. 3 Fibronectin type-III domains span residues 158–258 (PNKP…SEED), 262–357 (VPDD…TPES), and 362–457 (APEN…MPTT). 4 disordered regions span residues 455–500 (PTTS…PQGR), 515–1271 (ANGG…TVSP), 1311–1350 (LSRQ…IING), and 1444–1515 (THPP…CPPG). Residues 565–574 (TLRPPSRHGH) show a composition bias toward basic residues. The span at 614-625 (PSASASPAHHAS) shows a compositional bias: low complexity. Residues 626–641 (TQGTSHRPSLPASLND) show a composition bias toward polar residues. Composition is skewed to low complexity over residues 711–722 (SASAPPSRLSPP) and 759–778 (SRST…TQVS). A Phosphoserine modification is found at serine 717. Residues 786–799 (GESHGDGDREDGGR) are compositionally biased toward basic and acidic residues. Composition is skewed to polar residues over residues 941–957 (KYSS…QSTD) and 1027–1060 (SPSQ…TASS). The segment covering 1071-1088 (QDEDAQGSYDDDSTEVEA) has biased composition (acidic residues). The span at 1166–1176 (PLSSKSQQSVS) shows a compositional bias: polar residues. Residues 1197–1209 (SSSVPKWPSSSTP) show a composition bias toward low complexity. A compositionally biased stretch (basic and acidic residues) spans 1211–1226 (GGKDADGSLAKEEREP). Over residues 1445–1504 (HPPTTTMQPTTTTTPLPTTTTPRPTTATTRRTTTTRRTTTRRPTTTVRTTTRTTTTTTPT) the composition is skewed to low complexity. The Fibronectin type-III 5 domain occupies 1658–1752 (APRNITVVAV…PSVSFVTESD (95 aa)). N-linked (GlcNAc...) asparagine glycosylation occurs at asparagine 1661.

As to expression, almost absent from healthy skin; especially in epidermal keratinocytes, skin fibroblasts or endothelial cells and is barely detectable in benign melanocytic naevi. Expressed in the stroma close to skin tumors, in the tumor cells themselves and in the epidermis of psoriasis.

Its subcellular location is the secreted. Functionally, may be an activator of G protein signaling. The chain is Fibronectin type III domain-containing protein 1 (FNDC1) from Homo sapiens (Human).